A 134-amino-acid chain; its full sequence is Large ribosomal subunit protein uL16c (134 aa).

Belongs to the universal ribosomal protein uL16 family. In terms of assembly, part of the 50S ribosomal subunit.

Its subcellular location is the plastid. It localises to the chloroplast. The chain is Large ribosomal subunit protein uL16c from Oltmannsiellopsis viridis (Marine flagellate).